Here is a 153-residue protein sequence, read N- to C-terminus: MVQLLSAFVSLLSVVAVSGAAIPAPAPEAVVDVAPETATIEPTGNFTAQACMYICGSVCYSSSAISAALNKGYSYYEDGATAGSSSYPHRYNNYEGFDFPTAKPWYEFPILSSGRVYTGGSPGADRVIFDSHGNLDMLITHNGASGNNFVACN.

Residues 1 to 20 (MVQLLSAFVSLLSVVAVSGA) form the signal peptide. Positions 21 to 49 (AIPAPAPEAVVDVAPETATIEPTGNFTAQ) are excised as a propeptide. 2 cysteine pairs are disulfide-bonded: Cys-51-Cys-59 and Cys-55-Cys-152. His-89 is an active-site residue. Glu-107 functions as the Proton acceptor in the catalytic mechanism. His-141 acts as the Proton donor in catalysis.

This sequence belongs to the ribonuclease N1/T1 family.

The enzyme catalyses [RNA] containing guanosine + H2O = an [RNA fragment]-3'-guanosine-3'-phosphate + a 5'-hydroxy-ribonucleotide-3'-[RNA fragment].. This chain is Guanyl-specific ribonuclease N1 (grn), found in Neurospora crassa (strain ATCC 24698 / 74-OR23-1A / CBS 708.71 / DSM 1257 / FGSC 987).